The chain runs to 176 residues: MTRLTVEDLNQADKERFVDAVGDVYEESPWVAKRTWSEQPFSSIDGLQQAMANTVQDASQQKQLELLRAHPDLGERTEMTDESQEEQASAGLDRLPPAQYETFQTLNDTYRDKFGFPFIMAVKDESVGTIQQAMEDRIDHSRSKEFQTALNEVNVIAALRLEELTVPRDGTQEQHA.

Residue His-70 is the Proton donor; for OHCU decarboxylase activity of the active site. Substrate contacts are provided by residues Pro-71, Ser-83–Gln-87, and Phe-118–Val-122. Residues Asp-72 to Pro-96 are disordered.

This sequence belongs to the OHCU decarboxylase family.

The enzyme catalyses 5-hydroxy-2-oxo-4-ureido-2,5-dihydro-1H-imidazole-5-carboxylate + H(+) = (S)-allantoin + CO2. It functions in the pathway purine metabolism; urate degradation; (S)-allantoin from urate: step 3/3. In terms of biological role, catalyzes the stereoselective decarboxylation of 2-oxo-4-hydroxy-4-carboxy-5-ureidoimidazoline (OHCU) to (S)-allantoin. The protein is 2-oxo-4-hydroxy-4-carboxy-5-ureidoimidazoline decarboxylase of Halalkalicoccus jeotgali (strain DSM 18796 / CECT 7217 / JCM 14584 / KCTC 4019 / B3).